A 220-amino-acid polypeptide reads, in one-letter code: Glycerol-3-phosphate acyltransferase (220 aa).

6 consecutive transmembrane segments (helical) span residues 11–31 (INVIFTLLGYLIGGIPFGYAL), 70–90 (LLVLILDLFKGMFAVFLSKLF), 96–116 (LQWMVAIASILGHCYSPFLNF), 127–147 (GSVVLLIPIESLIGLTVWFFV), 153–173 (ISSLASILGVGTATVLIFFVP), and 193–213 (MVLIFIFTLIKHAGNIFNLLA).

Belongs to the PlsY family. Probably interacts with PlsX.

The protein localises to the cell inner membrane. The catalysed reaction is an acyl phosphate + sn-glycerol 3-phosphate = a 1-acyl-sn-glycero-3-phosphate + phosphate. It functions in the pathway lipid metabolism; phospholipid metabolism. Catalyzes the transfer of an acyl group from acyl-phosphate (acyl-PO(4)) to glycerol-3-phosphate (G3P) to form lysophosphatidic acid (LPA). This enzyme utilizes acyl-phosphate as fatty acyl donor, but not acyl-CoA or acyl-ACP. The chain is Glycerol-3-phosphate acyltransferase from Helicobacter pylori (strain ATCC 700392 / 26695) (Campylobacter pylori).